The sequence spans 654 residues: DNA ligase (654 aa).

Residues 34 to 38, 83 to 84, and Glu-114 contribute to the NAD(+) site; these read DLEYD and SL. The active-site N6-AMP-lysine intermediate is the Lys-116. Residues Arg-137, Glu-171, Lys-280, and Lys-304 each contribute to the NAD(+) site. Cys-396, Cys-399, Cys-414, and Cys-419 together coordinate Zn(2+). The BRCT domain occupies 577–654; sequence VISTILSGYT…EEQFYDLIKQ (78 aa).

It belongs to the NAD-dependent DNA ligase family. LigA subfamily. Mg(2+) serves as cofactor. Mn(2+) is required as a cofactor.

The enzyme catalyses NAD(+) + (deoxyribonucleotide)n-3'-hydroxyl + 5'-phospho-(deoxyribonucleotide)m = (deoxyribonucleotide)n+m + AMP + beta-nicotinamide D-nucleotide.. DNA ligase that catalyzes the formation of phosphodiester linkages between 5'-phosphoryl and 3'-hydroxyl groups in double-stranded DNA using NAD as a coenzyme and as the energy source for the reaction. It is essential for DNA replication and repair of damaged DNA. This chain is DNA ligase, found in Mycoplasmopsis agalactiae (strain NCTC 10123 / CIP 59.7 / PG2) (Mycoplasma agalactiae).